We begin with the raw amino-acid sequence, 60 residues long: Large ribosomal subunit protein bL32 (60 aa).

It belongs to the bacterial ribosomal protein bL32 family.

This Hydrogenobaculum sp. (strain Y04AAS1) protein is Large ribosomal subunit protein bL32.